Reading from the N-terminus, the 133-residue chain is Putative actin-depolymerizing factor 11 (133 aa).

The ADF-H domain maps to 1–133 (MVLHDDCKLT…SLDAIRRRIN (133 aa)).

The protein belongs to the actin-binding proteins ADF family.

It is found in the cytoplasm. The protein resides in the cytoskeleton. In terms of biological role, actin-depolymerizing protein. Severs actin filaments (F-actin) and binds to actin monomers. This is Putative actin-depolymerizing factor 11 (ADF11) from Arabidopsis thaliana (Mouse-ear cress).